A 117-amino-acid chain; its full sequence is Hydrogenase maturation factor HypA (117 aa).

Histidine 2 contacts Ni(2+). Positions 73, 76, 90, and 93 each coordinate Zn(2+).

This sequence belongs to the HypA/HybF family.

Functionally, involved in the maturation of [NiFe] hydrogenases. Required for nickel insertion into the metal center of the hydrogenase. This chain is Hydrogenase maturation factor HypA, found in Pectobacterium atrosepticum (strain SCRI 1043 / ATCC BAA-672) (Erwinia carotovora subsp. atroseptica).